Reading from the N-terminus, the 271-residue chain is Extracellular metalloprotease TRV_06892 (271 aa).

A signal peptide spans 1–19 (MRFSVLLTGLAAAGSIATA). An N-linked (GlcNAc...) asparagine glycan is attached at Asn-136. His-185 contributes to the Zn(2+) binding site. Glu-186 is an active-site residue. His-189 is a binding site for Zn(2+). An N-linked (GlcNAc...) asparagine glycan is attached at Asn-200. Cys-222 and Cys-248 are oxidised to a cystine.

Belongs to the peptidase M43B family.

The protein localises to the secreted. Secreted metalloproteinase that allows assimilation of proteinaceous substrates. Plays a pivotal role as a pathogenicity determinant during infections and contributes to the ability of the pathogen to persist within the mammalian host. The sequence is that of Extracellular metalloprotease TRV_06892 from Trichophyton verrucosum (strain HKI 0517).